The sequence spans 228 residues: Caspase recruitment domain-containing protein 19 (228 aa).

Cys7 and Cys77 are joined by a disulfide. A CARD domain is found at 8 to 99 (DRLVQDTPFL…PLHSRLPSRH (92 aa)). Val113 carries the post-translational modification Phosphoserine.

In terms of assembly, associates with BCL10 by CARD-CARD interaction. Expressed in ovary, testis, placenta, skeletal muscle, kidney, lung, heart and liver (at protein level). Expressed in thymus and brain.

The protein localises to the nucleus. It is found in the endoplasmic reticulum membrane. Its subcellular location is the mitochondrion membrane. Its function is as follows. Plays a role in inhibiting the effects of BCL10-induced activation of NF-kappa-B. May inhibit the phosphorylation of BCL10 in a CARD-dependent manner. This chain is Caspase recruitment domain-containing protein 19 (CARD19), found in Homo sapiens (Human).